The chain runs to 346 residues: Biotin synthase (346 aa).

The Radical SAM core domain maps to 40-264 (NEVQVSTLLS…MMPHSHVRLS (225 aa)). 3 residues coordinate [4Fe-4S] cluster: Cys-55, Cys-59, and Cys-62. 4 residues coordinate [2Fe-2S] cluster: Cys-99, Cys-130, Cys-190, and Arg-262.

The protein belongs to the radical SAM superfamily. Biotin synthase family. As to quaternary structure, homodimer. [4Fe-4S] cluster is required as a cofactor. The cofactor is [2Fe-2S] cluster.

The catalysed reaction is (4R,5S)-dethiobiotin + (sulfur carrier)-SH + 2 reduced [2Fe-2S]-[ferredoxin] + 2 S-adenosyl-L-methionine = (sulfur carrier)-H + biotin + 2 5'-deoxyadenosine + 2 L-methionine + 2 oxidized [2Fe-2S]-[ferredoxin]. It functions in the pathway cofactor biosynthesis; biotin biosynthesis; biotin from 7,8-diaminononanoate: step 2/2. In terms of biological role, catalyzes the conversion of dethiobiotin (DTB) to biotin by the insertion of a sulfur atom into dethiobiotin via a radical-based mechanism. The polypeptide is Biotin synthase (Colwellia psychrerythraea (strain 34H / ATCC BAA-681) (Vibrio psychroerythus)).